Reading from the N-terminus, the 136-residue chain is Large ribosomal subunit protein uL16 (136 aa).

The protein belongs to the universal ribosomal protein uL16 family. As to quaternary structure, part of the 50S ribosomal subunit.

Functionally, binds 23S rRNA and is also seen to make contacts with the A and possibly P site tRNAs. This is Large ribosomal subunit protein uL16 from Shigella flexneri.